The sequence spans 546 residues: Carboxypeptidase Y homolog A (546 aa).

Residues Met-1–Ile-17 form the signal peptide. The propeptide occupies Ala-18 to Lys-132. Intrachain disulfides connect Cys-186–Cys-426, Cys-320–Cys-334, Cys-344–Cys-367, Cys-351–Cys-360, and Cys-389–Cys-396. Asn-217 is a glycosylation site (N-linked (GlcNAc...) asparagine). Residue Ser-273 is part of the active site. Asp-465 is an active-site residue. Asn-512 is a glycosylation site (N-linked (GlcNAc...) asparagine). His-523 is a catalytic residue.

This sequence belongs to the peptidase S10 family.

The protein resides in the vacuole. The enzyme catalyses Release of a C-terminal amino acid with broad specificity.. Functionally, vacuolar carboxypeptidase involved in degradation of small peptides. Digests preferentially peptides containing an aliphatic or hydrophobic residue in P1' position, as well as methionine, leucine or phenylalanine in P1 position of ester substrate. The sequence is that of Carboxypeptidase Y homolog A (cpyA) from Sclerotinia sclerotiorum (strain ATCC 18683 / 1980 / Ss-1) (White mold).